The primary structure comprises 1358 residues: DNA-directed RNA polymerase subunit beta (1358 aa).

Positions 1033–1051 (QGLEDRKKEHEARFDDKKG) are enriched in basic and acidic residues. A disordered region spans residues 1033 to 1053 (QGLEDRKKEHEARFDDKKGKL).

The protein belongs to the RNA polymerase beta chain family. As to quaternary structure, the RNAP catalytic core consists of 2 alpha, 1 beta, 1 beta' and 1 omega subunit. When a sigma factor is associated with the core the holoenzyme is formed, which can initiate transcription.

The catalysed reaction is RNA(n) + a ribonucleoside 5'-triphosphate = RNA(n+1) + diphosphate. In terms of biological role, DNA-dependent RNA polymerase catalyzes the transcription of DNA into RNA using the four ribonucleoside triphosphates as substrates. This chain is DNA-directed RNA polymerase subunit beta, found in Marinobacter nauticus (strain ATCC 700491 / DSM 11845 / VT8) (Marinobacter aquaeolei).